The sequence spans 246 residues: UDP-N-acetyl-D-mannosaminuronic acid transferase (246 aa).

Belongs to the glycosyltransferase 26 family.

It carries out the reaction UDP-N-acetyl-alpha-D-mannosaminouronate + N-acetyl-alpha-D-glucosaminyl-di-trans,octa-cis-undecaprenyl diphosphate = beta-D-ManNAcA-(1-&gt;4)-alpha-D-GlcNAc-di-trans,octa-cis-undecaprenyl diphosphate + UDP + H(+). It participates in bacterial outer membrane biogenesis; enterobacterial common antigen biosynthesis. Its function is as follows. Catalyzes the synthesis of Und-PP-GlcNAc-ManNAcA (Lipid II), the second lipid-linked intermediate involved in enterobacterial common antigen (ECA) synthesis. This is UDP-N-acetyl-D-mannosaminuronic acid transferase from Escherichia coli (strain 55989 / EAEC).